A 319-amino-acid chain; its full sequence is Protein sprouty homolog 1 (319 aa).

M1 bears the N-acetylmethionine mark. Disordered stretches follow at residues 54 to 78 and 100 to 160; these read TEGPSVVKRPAPRTAPRQEKHERTH and AVLP…QPKQ. A compositionally biased stretch (basic and acidic residues) spans 69–78; sequence PRQEKHERTH. The span at 112-131 shows a compositional bias: low complexity; that stretch reads SRSTSTGSAASSGSNSSASS. The SPR domain occupies 183 to 295; the sequence is QCGKCKCGEC…CYDWIHRPGC (113 aa).

The protein belongs to the sprouty family. In terms of assembly, forms heterodimers with SPRY2. Interacts with TESK1. Interacts with CAV1 (via C-terminus).

It is found in the cytoplasm. Its subcellular location is the membrane. Its function is as follows. Inhibits fibroblast growth factor (FGF)-induced retinal lens fiber differentiation, probably by inhibiting FGF-mediated phosphorylation of ERK1/2. Inhibits TGFB-induced epithelial-to-mesenchymal transition in lens epithelial cells. The chain is Protein sprouty homolog 1 (SPRY1) from Homo sapiens (Human).